We begin with the raw amino-acid sequence, 679 residues long: Methionine--tRNA ligase (679 aa).

The 'HIGH' region signature appears at 12-22 (PYANGAIHLGH). Zn(2+) contacts are provided by Cys143, Cys146, Cys156, and Cys159. A 'KMSKS' region motif is present at residues 328–332 (KMSKS). Lys331 provides a ligand contact to ATP. In terms of domain architecture, tRNA-binding spans 577–679 (DFAKLDLRVA…EGIRPGMQVK (103 aa)).

It belongs to the class-I aminoacyl-tRNA synthetase family. MetG type 1 subfamily. Homodimer. Zn(2+) serves as cofactor.

Its subcellular location is the cytoplasm. The enzyme catalyses tRNA(Met) + L-methionine + ATP = L-methionyl-tRNA(Met) + AMP + diphosphate. In terms of biological role, is required not only for elongation of protein synthesis but also for the initiation of all mRNA translation through initiator tRNA(fMet) aminoacylation. The sequence is that of Methionine--tRNA ligase from Actinobacillus pleuropneumoniae serotype 5b (strain L20).